Consider the following 278-residue polypeptide: Glutamate racemase (278 aa).

Residues 13–14 and 45–46 each bind substrate; these read DS and YG. Cys-76 functions as the Proton donor/acceptor in the catalytic mechanism. 77–78 serves as a coordination point for substrate; that stretch reads NT. Cys-185 (proton donor/acceptor) is an active-site residue. 186-187 provides a ligand contact to substrate; sequence TH.

This sequence belongs to the aspartate/glutamate racemases family.

It carries out the reaction L-glutamate = D-glutamate. It participates in cell wall biogenesis; peptidoglycan biosynthesis. In terms of biological role, provides the (R)-glutamate required for cell wall biosynthesis. This chain is Glutamate racemase, found in Gloeothece citriformis (strain PCC 7424) (Cyanothece sp. (strain PCC 7424)).